We begin with the raw amino-acid sequence, 1346 residues long: Proline-rich protein 36 (1346 aa).

Disordered regions lie at residues 1–403, 426–512, 537–606, 633–679, 711–1155, and 1168–1240; these read MDNK…TQLI, SVSS…QATP, PLTT…PSPL, PRQT…VSPL, LETQ…AELA, and PPLA…RSPK. Over residues 10–26 the composition is skewed to low complexity; it reads AGAAARTPAARAPGLLT. Positions 27-40 are enriched in pro residues; sequence PRPPGSPRPPPPVT. Composition is skewed to low complexity over residues 41–55 and 86–97; these read PAAL…AVGR and SSRNPASRPPAS. Over residues 137–152 the composition is skewed to basic and acidic residues; that stretch reads SAEETVARGKATEAPK. The segment covering 165–177 has biased composition (low complexity); the sequence is SGPTPGTPSPAMA. The span at 191–203 shows a compositional bias: pro residues; that stretch reads RPAPSARPRPPTE. Positions 208 to 220 are enriched in polar residues; it reads SVSSASEHSTTEP. Low complexity-rich tracts occupy residues 235-255 and 293-312; these read QRPA…PARS and APAL…PSGT. Composition is skewed to pro residues over residues 329–343, 371–380, and 387–397; these read ATLP…PPPA, PLAPPSPSAP, and PSPPATPPSQV. Residues 426–464 show a composition bias toward low complexity; that stretch reads SVSSPLQSMPPTQANPALPSLPTLLSPLATPPLSAMSPL. Positions 494-506 are enriched in pro residues; it reads TPPPQASPSPSPP. The span at 546 to 558 shows a compositional bias: low complexity; it reads PPLVSPSLLASPP. Positions 559 to 578 are enriched in pro residues; the sequence is LQAPPHPQAPPSMTTPPMQA. The span at 633–647 shows a compositional bias: polar residues; sequence PRQTQASLISPSRPA. Pro residues predominate over residues 648–657; sequence STPPDSPPLQ. A compositionally biased stretch (low complexity) spans 658 to 679; that stretch reads APLSLPASPPLQTSLSPAVSPL. Positions 724 to 733 are enriched in polar residues; sequence TPPASLTTPP. Composition is skewed to pro residues over residues 781–821 and 829–865; these read ETPP…PALA and PSPP…PPLS. The span at 866 to 875 shows a compositional bias: low complexity; the sequence is PLATPSPQAP. 3 stretches are compositionally biased toward pro residues: residues 887–917, 926–997, and 1004–1015; these read FSPP…PSQA, LQVP…PPAS, and AKPPPQAPPALA. 3 stretches are compositionally biased toward low complexity: residues 1029–1046, 1137–1146, and 1224–1239; these read FPGQ…MSPL, DSGPEGGAAA, and GKAA…SRSP. Phosphoserine is present on S1310.

The chain is Proline-rich protein 36 from Homo sapiens (Human).